The chain runs to 315 residues: Transcription antitermination protein NusB (315 aa).

A disordered region spans residues 296–315 (SANFDTKSAELNDADEKSQD). Positions 302–315 (KSAELNDADEKSQD) are enriched in basic and acidic residues.

This sequence belongs to the NusB family.

In terms of biological role, involved in transcription antitermination. Required for transcription of ribosomal RNA (rRNA) genes. Binds specifically to the boxA antiterminator sequence of the ribosomal RNA (rrn) operons. This Psychrobacter cryohalolentis (strain ATCC BAA-1226 / DSM 17306 / VKM B-2378 / K5) protein is Transcription antitermination protein NusB.